A 156-amino-acid polypeptide reads, in one-letter code: uncharacterized protein (156 aa).

In terms of domain architecture, N-acetyltransferase spans 1–145; the sequence is MIIRKFSSKD…DAILMIKKKP (145 aa).

The protein belongs to the acetyltransferase family.

The protein resides in the cytoplasm. This is an uncharacterized protein from Methanocaldococcus jannaschii (strain ATCC 43067 / DSM 2661 / JAL-1 / JCM 10045 / NBRC 100440) (Methanococcus jannaschii).